Consider the following 124-residue polypeptide: MPTINQLVRKGRRDKTAKVKTAALKGSPQRRGVCTRVYTTTPKKPNSALRKVARVRLTTSVEVTAYIPGEGHNLQEHSMVLVRGGRVKDLPGVRYKIIRGSLDTQGVKGRKQARSRYGAKKEKS.

The interval Met1–Gly32 is disordered. The residue at position 89 (Asp89) is a 3-methylthioaspartic acid. A disordered region spans residues Thr104–Ser124. Positions Lys108 to Gly118 are enriched in basic residues.

This sequence belongs to the universal ribosomal protein uS12 family. As to quaternary structure, part of the 30S ribosomal subunit. Contacts proteins S8 and S17. May interact with IF1 in the 30S initiation complex.

With S4 and S5 plays an important role in translational accuracy. Functionally, interacts with and stabilizes bases of the 16S rRNA that are involved in tRNA selection in the A site and with the mRNA backbone. Located at the interface of the 30S and 50S subunits, it traverses the body of the 30S subunit contacting proteins on the other side and probably holding the rRNA structure together. The combined cluster of proteins S8, S12 and S17 appears to hold together the shoulder and platform of the 30S subunit. This is Small ribosomal subunit protein uS12 from Rhodococcus erythropolis (strain PR4 / NBRC 100887).